The chain runs to 285 residues: Biotin synthase (285 aa).

The Radical SAM core domain maps to 2–223 (STRKQIFLCA…RRAHTLLGED (222 aa)). [4Fe-4S] cluster is bound by residues Cys-20, Cys-24, and Cys-27. 3 residues coordinate [2Fe-2S] cluster: Cys-64, Cys-99, and Cys-157.

Belongs to the radical SAM superfamily. Biotin synthase family. As to quaternary structure, homodimer. It depends on [4Fe-4S] cluster as a cofactor. [2Fe-2S] cluster is required as a cofactor.

The catalysed reaction is (4R,5S)-dethiobiotin + (sulfur carrier)-SH + 2 reduced [2Fe-2S]-[ferredoxin] + 2 S-adenosyl-L-methionine = (sulfur carrier)-H + biotin + 2 5'-deoxyadenosine + 2 L-methionine + 2 oxidized [2Fe-2S]-[ferredoxin]. It participates in cofactor biosynthesis; biotin biosynthesis; biotin from 7,8-diaminononanoate: step 2/2. Its function is as follows. Catalyzes the conversion of dethiobiotin (DTB) to biotin by the insertion of a sulfur atom into dethiobiotin via a radical-based mechanism. This is Biotin synthase from Sulfurovum sp. (strain NBC37-1).